Here is an 876-residue protein sequence, read N- to C-terminus: Leucine--tRNA ligase (876 aa).

The 'HIGH' region signature appears at Pro-43 to His-53. A 'KMSKS' region motif is present at residues Lys-632–Ser-636. ATP is bound at residue Lys-635.

The protein belongs to the class-I aminoacyl-tRNA synthetase family.

The protein resides in the cytoplasm. It carries out the reaction tRNA(Leu) + L-leucine + ATP = L-leucyl-tRNA(Leu) + AMP + diphosphate. The chain is Leucine--tRNA ligase from Allorhizobium ampelinum (strain ATCC BAA-846 / DSM 112012 / S4) (Agrobacterium vitis (strain S4)).